The following is a 415-amino-acid chain: Putative ankyrin repeat protein FPV034 (415 aa).

ANK repeat units lie at residues 12–41, 43–72, 76–105, 107–135, 139–168, 170–200, 203–232, 237–266, 270–299, and 303–332; these read ICIKLLEQAIELKDYIVVRMILNQQENINT, KHFNMLRKAVLNHDHNLVNIFIDKNFNINI, VGYTLLRYAVEVDDVNIAKILLDAGSIINK, DYRLLHSAITHENKKMIELLCLHGININV, KGYTALYYTICNNNYDMVCFLLEKNADISI, NKYSMLHFLSTSNKYHNVMAVLLDKGIDVNI, HVKAPIHVAVERNNIYGTMLLINRNADVNI, GGRTSLHLAIKERNYEAAFVLINNGANVDS, VGNTPIFIAASLQDVRFMKLLLDNGADINV, and FGETPVNMVITGGSKEVTQYTVSYLISLKV.

The protein is Putative ankyrin repeat protein FPV034 (ANK2) of Fowlpox virus (strain NVSL) (FPV).